Here is a 120-residue protein sequence, read N- to C-terminus: Large ribosomal subunit protein bL17 (120 aa).

This sequence belongs to the bacterial ribosomal protein bL17 family. In terms of assembly, part of the 50S ribosomal subunit. Contacts protein L32.

In Geobacillus sp. (strain WCH70), this protein is Large ribosomal subunit protein bL17.